Here is a 470-residue protein sequence, read N- to C-terminus: Serine hydroxymethyltransferase 5 (470 aa).

An N6-(pyridoxal phosphate)lysine modification is found at Lys-244.

The protein belongs to the SHMT family. In terms of assembly, homotetramer. It depends on pyridoxal 5'-phosphate as a cofactor.

Its subcellular location is the cytoplasm. The catalysed reaction is (6R)-5,10-methylene-5,6,7,8-tetrahydrofolate + glycine + H2O = (6S)-5,6,7,8-tetrahydrofolate + L-serine. It participates in one-carbon metabolism; tetrahydrofolate interconversion. In terms of biological role, catalyzes the interconversion of serine and glycine. This is Serine hydroxymethyltransferase 5 (SHM5) from Arabidopsis thaliana (Mouse-ear cress).